The sequence spans 663 residues: DNA ligase (663 aa).

Residues 31 to 35 (DFEFD), 80 to 81 (SL), and Glu110 each bind NAD(+). Lys112 acts as the N6-AMP-lysine intermediate in catalysis. Residues Arg133, Glu170, Lys285, and Lys309 each coordinate NAD(+). Residues Cys404, Cys407, Cys422, and Cys428 each coordinate Zn(2+). The BRCT domain occupies 585-663 (FIDNKLAGKT…SEDEFLKMIE (79 aa)).

Belongs to the NAD-dependent DNA ligase family. LigA subfamily. Mg(2+) is required as a cofactor. It depends on Mn(2+) as a cofactor.

It catalyses the reaction NAD(+) + (deoxyribonucleotide)n-3'-hydroxyl + 5'-phospho-(deoxyribonucleotide)m = (deoxyribonucleotide)n+m + AMP + beta-nicotinamide D-nucleotide.. Functionally, DNA ligase that catalyzes the formation of phosphodiester linkages between 5'-phosphoryl and 3'-hydroxyl groups in double-stranded DNA using NAD as a coenzyme and as the energy source for the reaction. It is essential for DNA replication and repair of damaged DNA. In Azobacteroides pseudotrichonymphae genomovar. CFP2, this protein is DNA ligase.